The chain runs to 134 residues: SNAPIN protein homolog (134 aa).

The stretch at 50-124 forms a coiled coil; that stretch reads QLQAELRGQL…EKEQRRRQAL (75 aa).

It belongs to the SNAPIN family. As to quaternary structure, component of the biogenesis of lysosome-related organelles complex-1 (BLOC-1) composed of Blos1, Blos2, Blos3, Blos4, Dysb, Muted, Pldn and Snapin. Interacts with Blos2 and Dysb.

It localises to the membrane. Its subcellular location is the cytoplasm. The protein localises to the cytosol. Component of the biogenesis of lysosome-related organelles complex-1 (BLOC-1) involved in pigment granule biogenesis. May participate in the coupling of lysosomes to microtubule plus-end-directed kinesin motor. The chain is SNAPIN protein homolog from Drosophila melanogaster (Fruit fly).